Reading from the N-terminus, the 691-residue chain is DNA ligase (691 aa).

NAD(+)-binding positions include D41 to D45, S90 to L91, and E130. The active-site N6-AMP-lysine intermediate is K132. The NAD(+) site is built by R153, E190, K307, and K331. Residues C425, C428, C443, and C449 each contribute to the Zn(2+) site. The region spanning A610–R691 is the BRCT domain.

Belongs to the NAD-dependent DNA ligase family. LigA subfamily. It depends on Mg(2+) as a cofactor. The cofactor is Mn(2+).

It catalyses the reaction NAD(+) + (deoxyribonucleotide)n-3'-hydroxyl + 5'-phospho-(deoxyribonucleotide)m = (deoxyribonucleotide)n+m + AMP + beta-nicotinamide D-nucleotide.. Functionally, DNA ligase that catalyzes the formation of phosphodiester linkages between 5'-phosphoryl and 3'-hydroxyl groups in double-stranded DNA using NAD as a coenzyme and as the energy source for the reaction. It is essential for DNA replication and repair of damaged DNA. In Burkholderia pseudomallei (strain 668), this protein is DNA ligase.